A 224-amino-acid chain; its full sequence is Transcription factor MYB1 (224 aa).

HTH myb-type domains lie at 10–66 and 67–117; these read LGRV…KPSI and KRGH…YKKH. 2 consecutive DNA-binding regions (H-T-H motif) follow at residues 38-62 and 90-113; these read WKRVPERAGLNRCRKSCRWRWLNYL and WSLIAAKLPGRTINDVKNYCNTHL.

It is found in the nucleus. In terms of biological role, activates DODA1 and CYP76AD1 in the betalain red pigment pathway. The protein is Transcription factor MYB1 of Beta vulgaris (Sugar beet).